Reading from the N-terminus, the 346-residue chain is Eukaryotic translation initiation factor 3 subunit I (346 aa).

WD repeat units follow at residues 8–47, 50–89, 150–189, 192–233, and 289–328; these read GHER…RLGT, GHNG…IAHS, EGCA…CLEI, LHKQ…KTYE, and DHFG…FDFK.

It belongs to the eIF-3 subunit I family. As to quaternary structure, component of the eukaryotic translation initiation factor 3 (eIF-3) complex.

The protein resides in the cytoplasm. Its function is as follows. Component of the eukaryotic translation initiation factor 3 (eIF-3) complex, which is involved in protein synthesis of a specialized repertoire of mRNAs and, together with other initiation factors, stimulates binding of mRNA and methionyl-tRNAi to the 40S ribosome. The eIF-3 complex specifically targets and initiates translation of a subset of mRNAs involved in cell proliferation. In Eremothecium gossypii (strain ATCC 10895 / CBS 109.51 / FGSC 9923 / NRRL Y-1056) (Yeast), this protein is Eukaryotic translation initiation factor 3 subunit I.